We begin with the raw amino-acid sequence, 1681 residues long: Meiosis regulator and mRNA stability factor 1 (1681 aa).

The NYN domain maps to 340 to 477 (IGVFWDIENC…ALLHHAHELI (138 aa)). 2 disordered regions span residues 576 to 595 (VNET…PKKV) and 638 to 717 (QMQS…DVVF). Polar residues predominate over residues 638–647 (QMQSKSNKTS). The segment covering 648 to 658 (QQEKDKKRNGD) has biased composition (basic and acidic residues). Residues 659-690 (KQGTLSQSSPLCTNQMLQTARNVGTDNTASKS) show a composition bias toward polar residues. Basic and acidic residues predominate over residues 692–715 (QKRDDTTRKSNADSQKEQKNKEDV). The RRM domain occupies 779-858 (ADIQIGNLDY…KRIQVSLATG (80 aa)). HTH OST-type domains lie at 863–937 (SLSL…SPMG), 991–1067 (SLKT…HNKP), 1087–1161 (QLIQ…LTHR), 1163–1238 (QVKR…IPKR), 1247–1321 (RTKQ…LTEM), 1323–1398 (RIKA…INRK), 1399–1472 (SLRS…SVQL), and 1474–1548 (SLYV…LKND). Polar residues predominate over residues 1637–1648 (EPSTQNICPQES). Residues 1637 to 1662 (EPSTQNICPQESKSTKELPESPVKRQ) form a disordered region. Positions 1649–1659 (KSTKELPESPV) are enriched in basic and acidic residues.

Its subcellular location is the peroxisome. In terms of biological role, essential regulator of oogenesis required for female meiotic progression to repress transposable elements and preventing their mobilization, which is essential for the germline integrity. This is Meiosis regulator and mRNA stability factor 1 from Xenopus tropicalis (Western clawed frog).